The following is a 545-amino-acid chain: Cytosolic Fe-S cluster assembly factor NAR1 (545 aa).

[4Fe-4S] cluster-binding residues include cysteine 20, cysteine 74, cysteine 77, cysteine 80, cysteine 188, cysteine 243, cysteine 454, and cysteine 458.

Belongs to the NARF family.

Its function is as follows. Component of the cytosolic Fe/S protein assembly machinery. Required for maturation of extramitochondrial Fe/S proteins. May play a role in the transfer of pre-assembled Fe/S clusters to target apoproteins. The protein is Cytosolic Fe-S cluster assembly factor NAR1 (NAR1) of Scheffersomyces stipitis (strain ATCC 58785 / CBS 6054 / NBRC 10063 / NRRL Y-11545) (Yeast).